The chain runs to 111 residues: MARKRQRRRRRKVTRSQRAELQFPVSRVDRFLREGNYSRRLSSSAPVFLAGVLEYLTSNILELAGEVAHTTGRKRIAPEHVCRVVQNNEQLHQLFKQGGTSVFEPPEPDDN.

This sequence belongs to the histone H2A family. The nucleosome is a histone octamer containing two molecules each of H2A, H2B, H3 and H4 assembled in one H3-H4 heterotetramer and two H2A-H2B heterodimers. Incorporated into nucleosomes during late spermatogenesis. Interacts with H2BC1/TH2B; preferentially dimerizes with H2BC1/TH2B to form nucleosomes. Highly expressed in adult testis, mainly in spermatocytes.

It is found in the nucleus. It localises to the chromosome. Its function is as follows. Atypical histone H2A which replaces conventional H2A during late spermatogenesis and is involved in the replacement of histones to protamine in male germ cells. Core component of nucleosome: nucleosomes wrap and compact DNA into chromatin, limiting DNA accessibility to the cellular machineries which require DNA as a template. Nucleosomes containing H2AB1 only wrap 130 bp of DNA, compared to 147 bp for classical nucleosomes. In condensing spermatids, the heterodimer between H2AB1 and H2BC1/TH2B is loaded onto the nucleosomes and promotes loading of transition proteins (TNP1 and TNP2) onto the nucleosomes. Inclusion of the H2AB1-H2BC1/TH2B dimer into chromatin opens the nucleosomes, releasing the nucleosomal DNA ends and allowing the invasion of nucleosomes by transition proteins (TNP1 and TNP2). Then, transition proteins drive the recruitment and processing of protamines, which are responsible for histone eviction. This Mus musculus (Mouse) protein is Histone H2A-Bbd type 1 (H2ab1).